The sequence spans 247 residues: Capsid protein (247 aa).

Residues 1-40 are DNA-binding; sequence MWGTSNCACAKFQIRRRYARPYRRRHIRRYRRRRRHFRRR. A nuclear localization signals region spans residues 15-44; the sequence is RRRYARPYRRRHIRRYRRRRRHFRRRRFTT.

The protein belongs to the circoviridae capsid protein family. Homomultimer. Assembles in the nucleus, presumably in an immature form, then migrates to the cytoplasm once assembled as mature virion. Interacts with Rep; this interaction relocates Rep into the nucleus.

It is found in the host nucleus. Its subcellular location is the virion. In terms of biological role, self-assembles to form the virion icosahedral capsid with a T=1 symmetry. This very small capsid (17 - 22 nm in diameter) allows the virus to be very stable in the environment and resistant to some disinfectants, including detergents. Essential for the initial attachment to heparan sulfate moieties and chondroitin sulfate B of the host cell surface proteoglycans. After attachment, the virus is endocytosed and traffics to the nucleus. The capsid protein binds and transports the viral genome and Rep across the nuclear envelope. This is Capsid protein (Cap) from Beak and feather disease virus (BFDV).